Here is a 472-residue protein sequence, read N- to C-terminus: 3-isopropylmalate dehydratase large subunit (472 aa).

Positions 347, 407, and 410 each coordinate [4Fe-4S] cluster.

This sequence belongs to the aconitase/IPM isomerase family. LeuC type 1 subfamily. As to quaternary structure, heterodimer of LeuC and LeuD. [4Fe-4S] cluster is required as a cofactor.

It carries out the reaction (2R,3S)-3-isopropylmalate = (2S)-2-isopropylmalate. It participates in amino-acid biosynthesis; L-leucine biosynthesis; L-leucine from 3-methyl-2-oxobutanoate: step 2/4. In terms of biological role, catalyzes the isomerization between 2-isopropylmalate and 3-isopropylmalate, via the formation of 2-isopropylmaleate. The sequence is that of 3-isopropylmalate dehydratase large subunit from Synechococcus sp. (strain CC9605).